The primary structure comprises 507 residues: NADH-quinone oxidoreductase subunit N (507 aa).

A run of 15 helical transmembrane segments spans residues Leu-17–Ala-37, Val-46–Gly-66, Tyr-81–Tyr-101, Ala-113–His-133, Phe-134–Tyr-154, Tyr-168–Ala-188, Leu-190–Glu-210, Leu-211–Val-231, Pro-245–Leu-265, Ile-279–Leu-299, Ile-307–Asp-327, Val-334–Val-354, Ala-392–Ile-412, Ser-425–Met-445, and Leu-478–Val-498.

It belongs to the complex I subunit 2 family. NDH-1 is composed of 14 different subunits. Subunits NuoA, H, J, K, L, M, N constitute the membrane sector of the complex.

It localises to the cell inner membrane. The catalysed reaction is a quinone + NADH + 5 H(+)(in) = a quinol + NAD(+) + 4 H(+)(out). Functionally, NDH-1 shuttles electrons from NADH, via FMN and iron-sulfur (Fe-S) centers, to quinones in the respiratory chain. The immediate electron acceptor for the enzyme in this species is believed to be ubiquinone. Couples the redox reaction to proton translocation (for every two electrons transferred, four hydrogen ions are translocated across the cytoplasmic membrane), and thus conserves the redox energy in a proton gradient. The protein is NADH-quinone oxidoreductase subunit N of Nitrosospira multiformis (strain ATCC 25196 / NCIMB 11849 / C 71).